We begin with the raw amino-acid sequence, 206 residues long: Probable GTP-binding protein EngB (206 aa).

The region spanning 8-195 (RSDEVVLVGR…EDAVNSHFDA (188 aa)) is the EngB-type G domain. GTP contacts are provided by residues 16 to 23 (GRSNVGKS), 41 to 45 (GVTRQ), 60 to 63 (DLPG), 140 to 143 (NKMD), and 175 to 177 (ITA). 2 residues coordinate Mg(2+): Ser23 and Thr43.

The protein belongs to the TRAFAC class TrmE-Era-EngA-EngB-Septin-like GTPase superfamily. EngB GTPase family. The cofactor is Mg(2+).

Functionally, necessary for normal cell division and for the maintenance of normal septation. In Halobacterium salinarum (strain ATCC 29341 / DSM 671 / R1), this protein is Probable GTP-binding protein EngB.